Reading from the N-terminus, the 305-residue chain is tRNA pseudouridine synthase B (305 aa).

The active-site Nucleophile is the Asp-50.

It belongs to the pseudouridine synthase TruB family. Type 1 subfamily.

The catalysed reaction is uridine(55) in tRNA = pseudouridine(55) in tRNA. Functionally, responsible for synthesis of pseudouridine from uracil-55 in the psi GC loop of transfer RNAs. This is tRNA pseudouridine synthase B from Rhodococcus jostii (strain RHA1).